We begin with the raw amino-acid sequence, 504 residues long: Histidine ammonia-lyase (504 aa).

The 5-imidazolinone (Ala-Gly) cross-link spans 142–144 (ASG). Serine 143 bears the 2,3-didehydroalanine (Ser) mark.

Belongs to the PAL/histidase family. In terms of processing, contains an active site 4-methylidene-imidazol-5-one (MIO), which is formed autocatalytically by cyclization and dehydration of residues Ala-Ser-Gly.

It localises to the cytoplasm. The enzyme catalyses L-histidine = trans-urocanate + NH4(+). It participates in amino-acid degradation; L-histidine degradation into L-glutamate; N-formimidoyl-L-glutamate from L-histidine: step 1/3. In Staphylococcus aureus (strain JH1), this protein is Histidine ammonia-lyase.